The following is a 167-amino-acid chain: Ribonuclease P protein subunit p20 (167 aa).

Residues 1–36 (MMGSNYPEHGTKPRSAKYHKQQNHRVVRKQPPRPAV) are disordered. The span at 12-31 (KPRSAKYHKQQNHRVVRKQP) shows a compositional bias: basic residues.

Interacts with Smn.

It is found in the nucleus. Its subcellular location is the nucleolus. It localises to the cytoplasm. The protein resides in the cytoplasmic granule. In terms of biological role, component of ribonuclease P, a protein complex that generates mature tRNA molecules by cleaving their 5'-ends. Also a component of RNase MRP complex, which cleaves pre-rRNA sequences. This Drosophila melanogaster (Fruit fly) protein is Ribonuclease P protein subunit p20.